The chain runs to 431 residues: Putative malic acid transport protein (431 aa).

The next 10 helical transmembrane spans lie at 30-50 (FTWAWFASAMGTGGIGMVTSL), 62-82 (GKIIFIFQLSILTLYICCITF), 101-121 (VLFMPTALLAIATSISNLYPY), 136-156 (ILYWIFVAVACIFVISLFYSL), 167-187 (IIPALVLPIFPCMICGVIASA), 201-221 (VVAGIAFQGLGFWIYIIVYAV), 239-259 (GMFILVSPPSFTGLTLLDLAF), 284-304 (FMALFMIGLGIFNFCLAFVSV), 318-338 (VSWFAMIFANVGLVMDVQELG), and 346-366 (VCIVGQVCGVTITIVWIILIL). Basic and acidic residues predominate over residues 402–424 (EEEKDEAERSKRKAEESDGKTTR). Residues 402-431 (EEEKDEAERSKRKAEESDGKTTRELTSGGL) form a disordered region.

Belongs to the tellurite-resistance/dicarboxylate transporter (TDT) family.

The protein resides in the membrane. The chain is Putative malic acid transport protein from Schizosaccharomyces pombe (strain 972 / ATCC 24843) (Fission yeast).